Here is a 356-residue protein sequence, read N- to C-terminus: Alanine racemase (356 aa).

The active-site Proton acceptor; specific for D-alanine is Lys34. Lys34 bears the N6-(pyridoxal phosphate)lysine mark. Arg129 is a binding site for substrate. Tyr253 functions as the Proton acceptor; specific for L-alanine in the catalytic mechanism. Met301 provides a ligand contact to substrate.

The protein belongs to the alanine racemase family. Requires pyridoxal 5'-phosphate as cofactor.

It catalyses the reaction L-alanine = D-alanine. It functions in the pathway amino-acid biosynthesis; D-alanine biosynthesis; D-alanine from L-alanine: step 1/1. Functionally, catalyzes the interconversion of L-alanine and D-alanine. May also act on other amino acids. The polypeptide is Alanine racemase (alr) (Nitrosococcus oceani (strain ATCC 19707 / BCRC 17464 / JCM 30415 / NCIMB 11848 / C-107)).